The primary structure comprises 39 residues: LIM/homeobox protein xLIM-2B (39 aa).

A DNA-binding region (homeobox) is located at residues 1 to 39 (KAKQLETLKAAFAATPKPTRHIREQLAQETGLNMRVIQV).

Its subcellular location is the nucleus. In Xenopus laevis (African clawed frog), this protein is LIM/homeobox protein xLIM-2B (lim2b).